The chain runs to 120 residues: NAD(P)H-quinone oxidoreductase subunit 3 (120 aa).

The next 3 helical transmembrane spans lie at 10–30 (FLGF…TNLI), 64–84 (MFAL…PWAV), and 89–109 (LGLL…IALA).

The protein belongs to the complex I subunit 3 family. NDH-1 can be composed of about 15 different subunits; different subcomplexes with different compositions have been identified which probably have different functions.

Its subcellular location is the cellular thylakoid membrane. The enzyme catalyses a plastoquinone + NADH + (n+1) H(+)(in) = a plastoquinol + NAD(+) + n H(+)(out). The catalysed reaction is a plastoquinone + NADPH + (n+1) H(+)(in) = a plastoquinol + NADP(+) + n H(+)(out). Functionally, NDH-1 shuttles electrons from an unknown electron donor, via FMN and iron-sulfur (Fe-S) centers, to quinones in the respiratory and/or the photosynthetic chain. The immediate electron acceptor for the enzyme in this species is believed to be plastoquinone. Couples the redox reaction to proton translocation, and thus conserves the redox energy in a proton gradient. Cyanobacterial NDH-1 also plays a role in inorganic carbon-concentration. The protein is NAD(P)H-quinone oxidoreductase subunit 3 of Prochlorococcus marinus (strain MIT 9312).